The primary structure comprises 101 residues: MGGAYITSRYWLVPAHVTSRLRLTSFTGHRGVARVDGPMSSLGLNIIKCAVNGGMDMTGKMSSSWTIFMGGYLIARCSASATVIHIKCQSRALLWSLPARG.

This is an uncharacterized protein from Gracula (BFDV).